The chain runs to 367 residues: Sigma54-dependent transcriptional regulator SfnR (367 aa).

A Sigma-54 factor interaction domain is found at 21–250 (QVFEDPKSQA…LENVIHHTLL (230 aa)). Residues 49–56 (GETGTGKE) and 112–121 (ADGGTLFLDE) contribute to the ATP site.

Its function is as follows. Involved in the dimethyl sulfide degradation pathway. Activates the expression of sfnG and sfnF. This is Sigma54-dependent transcriptional regulator SfnR from Pseudomonas fluorescens (strain Pf0-1).